A 324-amino-acid chain; its full sequence is Acetyl-coenzyme A carboxylase carboxyl transferase subunit beta (324 aa).

The span at 1–16 (MTKNNNDLSNSSSNPP) shows a compositional bias: low complexity. The interval 1-51 (MTKNNNDLSNSSSNPPSNRPVAGKEAELEIQRETHAAQSGQSESWLSRPIP) is disordered. Residues 22–35 (AGKEAELEIQRETH) are compositionally biased toward basic and acidic residues. Polar residues predominate over residues 36–45 (AAQSGQSESW). Residues 68 to 324 (PSTECPQCHS…YRLLAKLTHV (257 aa)) form the CoA carboxyltransferase N-terminal domain. Residues Cys-72, Cys-75, Cys-91, and Cys-94 each coordinate Zn(2+). Residues 72 to 94 (CPQCHSMITNTALIFNAYVCPHC) form a C4-type zinc finger.

It belongs to the AccD/PCCB family. In terms of assembly, acetyl-CoA carboxylase is a heterohexamer composed of biotin carboxyl carrier protein (AccB), biotin carboxylase (AccC) and two subunits each of ACCase subunit alpha (AccA) and ACCase subunit beta (AccD). Requires Zn(2+) as cofactor.

It localises to the cytoplasm. It carries out the reaction N(6)-carboxybiotinyl-L-lysyl-[protein] + acetyl-CoA = N(6)-biotinyl-L-lysyl-[protein] + malonyl-CoA. The protein operates within lipid metabolism; malonyl-CoA biosynthesis; malonyl-CoA from acetyl-CoA: step 1/1. Functionally, component of the acetyl coenzyme A carboxylase (ACC) complex. Biotin carboxylase (BC) catalyzes the carboxylation of biotin on its carrier protein (BCCP) and then the CO(2) group is transferred by the transcarboxylase to acetyl-CoA to form malonyl-CoA. This Psychrobacter sp. (strain PRwf-1) protein is Acetyl-coenzyme A carboxylase carboxyl transferase subunit beta.